The chain runs to 366 residues: MTSLSEFVSEPIGMMSQTSAASESQCYYNETIAFFYNRSGKYLDTEWNAVSKLVMGLGITVCIFIMLANLLVMVAIYVNRRFHFPIYYLMANLAAADFFAGLAYFYLMFNTGPNTRRLTVSTWLLRQGLIDTSLTASVANLLAIAIERHITVFRMQLHTRMSNRRVVVVIVVIWTVAIVMGAIPSVGWNCICDLEHCSNMAPLYSDSYLIFWTIFNLVTFVVMVVLYAHIFVYVRQRTMRMSRHSSGPRRNRDTMMSLLKTVVIVLGAFIVCWTPGLVLLLLDVCCPQCNILAYEKFFLLLAEFNSAMNPIIYSYRDKEMSATFKQILCCQRTENVNGPTEGSDRSASSLNHTILAGVHSNDHSVV.

At 1-52 (MTSLSEFVSEPIGMMSQTSAASESQCYYNETIAFFYNRSGKYLDTEWNAVSK) the chain is on the extracellular side. Disulfide bonds link C26–C192 and C190–C197. Residues N29 and N37 are each glycosylated (N-linked (GlcNAc...) asparagine). K41 serves as a coordination point for a 1-acyl-sn-glycero-3-phosphate. Residues 53–77 (LVMGLGITVCIFIMLANLLVMVAIY) form a helical membrane-spanning segment. Residues 78–85 (VNRRFHFP) lie on the Cytoplasmic side of the membrane. A helical membrane pass occupies residues 86–109 (IYYLMANLAAADFFAGLAYFYLMF). The Extracellular portion of the chain corresponds to 110–123 (NTGPNTRRLTVSTW). A helical transmembrane segment spans residues 124–146 (LLRQGLIDTSLTASVANLLAIAI). Residue 126–131 (RQGLID) participates in a 1-acyl-sn-glycero-3-phosphate binding. Residues 147-165 (ERHITVFRMQLHTRMSNRR) are Cytoplasmic-facing. A helical membrane pass occupies residues 166–186 (VVVVIVVIWTVAIVMGAIPSV). The Extracellular portion of the chain corresponds to 187–206 (GWNCICDLEHCSNMAPLYSD). A helical membrane pass occupies residues 207-227 (SYLIFWTIFNLVTFVVMVVLY). W212 is a binding site for a 1-acyl-sn-glycero-3-phosphate. Over 228–257 (AHIFVYVRQRTMRMSRHSSGPRRNRDTMMS) the chain is Cytoplasmic. The chain crosses the membrane as a helical span at residues 258–282 (LLKTVVIVLGAFIVCWTPGLVLLLL). Residues 283–296 (DVCCPQCNILAYEK) lie on the Extracellular side of the membrane. C286 and C289 are disulfide-bonded. Residues 297–317 (FFLLLAEFNSAMNPIIYSYRD) traverse the membrane as a helical segment. Topologically, residues 318 to 366 (KEMSATFKQILCCQRTENVNGPTEGSDRSASSLNHTILAGVHSNDHSVV) are cytoplasmic.

This sequence belongs to the G-protein coupled receptor 1 family. In terms of tissue distribution, expressed at high levels in oocytes and at lower levels in brain and spinal cord. Below detection level in lung, heart, kidney, liver, muscle, stomach, and intestine.

Its subcellular location is the cell surface. The protein localises to the cell membrane. It is found in the endosome. Receptor for lysophosphatidic acid (LPA). Plays a role in the reorganization of the actin cytoskeleton, cell migration, differentiation and proliferation, and thereby contributes to the responses to tissue damage and infectious agents. Activates downstream signaling cascades via the G(i)/G(o), G(12)/G(13), and G(q) families of heteromeric G proteins. Signaling inhibits adenylyl cyclase activity and decreases cellular cAMP levels. Signaling triggers an increase of cytoplasmic Ca(2+) levels. Signaling leads to the activation of phospholipase C (PLC) and the formation of inositol 1,4,5-trisphosphate. Signaling mediates activation of down-stream MAP kinases. Contributes to the regulation of cell shape. Promotes Rho-dependent reorganization of the actin cytoskeleton in neuronal cells and neurite retraction. Promotes the activation of Rho and the formation of actin stress fibers. Promotes formation of lamellipodia at the leading edge of migrating cells via activation of Rac. Through its function as lysophosphatidic acid receptor, plays a role in chemotaxis and cell migration, including responses to injury and wounding. Promotes cell proliferation in response to lysophosphatidic acid. In Xenopus laevis (African clawed frog), this protein is Lysophosphatidic acid receptor 1-B (lpar1-b).